Consider the following 204-residue polypeptide: UPF0637 protein SA0957 (204 aa).

The protein belongs to the UPF0637 family.

The polypeptide is UPF0637 protein SA0957 (Staphylococcus aureus (strain N315)).